The following is a 606-amino-acid chain: Glutamine--fructose-6-phosphate aminotransferase [isomerizing] (606 aa).

Residue Cys2 is the Nucleophile; for GATase activity of the active site. In terms of domain architecture, Glutamine amidotransferase type-2 spans 2-217 (CGIVGMVGEN…DGDVMVLRKD (216 aa)). 2 consecutive SIS domains span residues 284–423 (YEEL…INGY) and 455–596 (LSEK…PDKP). Lys601 functions as the For Fru-6P isomerization activity in the catalytic mechanism.

As to quaternary structure, homodimer.

The protein resides in the cytoplasm. It carries out the reaction D-fructose 6-phosphate + L-glutamine = D-glucosamine 6-phosphate + L-glutamate. In terms of biological role, catalyzes the first step in hexosamine metabolism, converting fructose-6P into glucosamine-6P using glutamine as a nitrogen source. This chain is Glutamine--fructose-6-phosphate aminotransferase [isomerizing], found in Thermotoga maritima (strain ATCC 43589 / DSM 3109 / JCM 10099 / NBRC 100826 / MSB8).